Reading from the N-terminus, the 491-residue chain is UDP-N-acetylmuramate--L-alanine ligase (491 aa).

126–132 lines the ATP pocket; sequence GTHGKTT.

Belongs to the MurCDEF family.

It localises to the cytoplasm. The enzyme catalyses UDP-N-acetyl-alpha-D-muramate + L-alanine + ATP = UDP-N-acetyl-alpha-D-muramoyl-L-alanine + ADP + phosphate + H(+). It participates in cell wall biogenesis; peptidoglycan biosynthesis. Functionally, cell wall formation. This chain is UDP-N-acetylmuramate--L-alanine ligase, found in Klebsiella pneumoniae subsp. pneumoniae (strain ATCC 700721 / MGH 78578).